The chain runs to 1077 residues: Eukaryotic translation initiation factor 2-alpha kinase pek-1 (1077 aa).

Residues 1 to 23 form the signal peptide; it reads MSVYYIVLAGFLLFMALVPFNAG. At 24–453 the chain is on the lumenal side; that stretch reads QQYIDDDIEV…ITLMQTIFSY (430 aa). The N-linked (GlcNAc...) asparagine glycan is linked to N206. Residues 454 to 474 traverse the membrane as a helical segment; sequence IFNPTAVVSFLAGLIGVTVAV. The Cytoplasmic portion of the chain corresponds to 475-1077; the sequence is VYNKIAKSSP…HEVATHKFLQ (603 aa). In terms of domain architecture, Protein kinase spans 604–1076; the sequence is FEVKKVIGHG…AHEVATHKFL (473 aa). ATP is bound by residues 610–618 and K633; that span reads IGHGGFGVV. The segment at 727-834 is disordered; sequence MPPVVGNTTD…FVDGSDDVDN (108 aa). Over residues 732–746 the composition is skewed to polar residues; that stretch reads GNTTDAENSWSTSAK. The segment covering 766–778 has biased composition (basic and acidic residues); the sequence is GSDRTTAELKEES. Positions 783–796 are enriched in acidic residues; it reads ESDEESDTTEDSSS. The span at 797-808 shows a compositional bias: low complexity; it reads SDESPSSSSGSS. D933 acts as the Proton acceptor in catalysis.

Belongs to the protein kinase superfamily. Ser/Thr protein kinase family. GCN2 subfamily. Forms dimers with HSPA5/BIP in resting cells. Oligomerizes in ER-stressed cells. Autophosphorylated. Post-translationally, N-glycosylated. As to expression, expressed in intestinal cells.

It localises to the endoplasmic reticulum membrane. It carries out the reaction L-seryl-[protein] + ATP = O-phospho-L-seryl-[protein] + ADP + H(+). It catalyses the reaction L-threonyl-[protein] + ATP = O-phospho-L-threonyl-[protein] + ADP + H(+). Perturbation in protein folding in the endoplasmic reticulum (ER) promotes reversible dissociation from HSPA5/BIP and oligomerization, resulting in transautophosphorylation and kinase activity induction. In terms of biological role, phosphorylates the alpha subunit of eukaryotic translation-initiation factor 2 (eIF2alpha), leading to its inactivation and thus to a rapid reduction of translational initiation and repression of global protein synthesis. May phosphorylate eIF2alpha during hypoxia. Proposed to have a role in alleviating endoplasmic reticulum stress. The chain is Eukaryotic translation initiation factor 2-alpha kinase pek-1 (pek-1) from Caenorhabditis elegans.